Consider the following 526-residue polypeptide: 3',5'-cyclic-nucleotide phosphodiesterase 2 (526 aa).

The PDEase domain maps to 182-526; it reads RNIEFMSFLS…EYWMKHKKPQ (345 aa). His265 functions as the Proton donor in the catalytic mechanism. A divalent metal cation-binding residues include His269, His302, Asp303, and Asp400.

It belongs to the cyclic nucleotide phosphodiesterase family. Monomer. A divalent metal cation serves as cofactor.

The catalysed reaction is 3',5'-cyclic AMP + H2O = AMP + H(+). Functionally, controls the level of cAMP in yeast cells, together with the low-affinity cAMP phosphodiesterase (PDE1). The chain is 3',5'-cyclic-nucleotide phosphodiesterase 2 from Saccharomyces cerevisiae (strain ATCC 204508 / S288c) (Baker's yeast).